A 105-amino-acid chain; its full sequence is MKVAGVFLLLSLALLCFFSGEFSQGGQDKRGWITRSEGRFPGKGVLRHRLFQINCGEFRDPKVFCTRESDPLCGSDGQTYGNKCAFCKALEKSSGKINLKHRGKC.

An N-terminal signal peptide occupies residues 1 to 23; the sequence is MKVAGVFLLLSLALLCFFSGEFS. A Pyrrolidone carboxylic acid modification is found at Q24. Residues 49–105 enclose the Kazal-like domain; it reads RLFQINCGEFRDPKVFCTRESDPLCGSDGQTYGNKCAFCKALEKSSGKINLKHRGKC. Intrachain disulfides connect C55–C87, C65–C84, and C73–C105.

The protein localises to the secreted. Serine protease inhibitor selective for kallikreins. Efficiently inhibits KLK4, KLK5, KLK6, KLK7, KLK12, KLK13 and KLK14. Doesn't inhibit KLK8. In Rattus norvegicus (Rat), this protein is Serine protease inhibitor Kazal-type 6 (Spink6).